A 416-amino-acid polypeptide reads, in one-letter code: MNLGIPRGVQDILPDETPFWHLIENTARNLFEKYNYEEIRTPIFEFTELFIKGTGETTDIVMKEMYTFQDKKGRSLTLRPEGTPGVIRAYLMNKVYATTPIWKVYYIGPMFRYERPQAGRYRQFHQLGVEVLGRKDPYIDFEIINLAIEFLKTLELENLEVEINSLGCTKCRPAYREALKNYFSQYKDILSHIDQERLERNPLRILDSKDEKIIPLKENAPQPLDFLCDDCKNHFEKVLNYMKEADLSFKISPKLVRGLDYYTRTVFEITTTSLGAQNAVVGGGRYDNLVETYGGPSTPGLGFALGIERLILLLKQQNKIKIERPSLIFIAIEKEKYVKKAMEIAKTLRTNYRVEMGSPEESLRTQLKWADKLNSDYVIFVNQGIENNILKIKNFKTGEEKEIKIKDIKELQHIVL.

The protein belongs to the class-II aminoacyl-tRNA synthetase family. As to quaternary structure, homodimer.

The protein localises to the cytoplasm. It catalyses the reaction tRNA(His) + L-histidine + ATP = L-histidyl-tRNA(His) + AMP + diphosphate + H(+). The sequence is that of Histidine--tRNA ligase from Dictyoglomus thermophilum (strain ATCC 35947 / DSM 3960 / H-6-12).